Here is a 321-residue protein sequence, read N- to C-terminus: Geranylgeranyl transferase type-2 subunit beta 1 (321 aa).

At serine 2 the chain carries N-acetylserine. PFTB repeat units follow at residues 14–55 (ADKH…DLLD), 62–103 (EEEV…ALFD), 110–151 (IGKV…SILK), 158–199 (VEKA…AITG), 206–247 (KDSL…IMID), and 254–296 (KAKL…SLLE). Geranylgeranyl diphosphate-binding positions include 184–186 (HAG) and 226–229 (RPEK). Zn(2+) contacts are provided by aspartate 232 and cysteine 234. 235 to 238 (YSWW) provides a ligand contact to geranylgeranyl diphosphate. Histidine 284 provides a ligand contact to Zn(2+).

It belongs to the protein prenyltransferase subunit beta family. In terms of assembly, heterotrimer composed of the alpha subunit RGTA, the beta subunit RGTB and REP; within this trimer, RGTA and RGTB form the catalytic component, while REP mediates peptide substrate binding. Requires Zn(2+) as cofactor. Mg(2+) serves as cofactor.

It catalyses the reaction geranylgeranyl diphosphate + L-cysteinyl-[protein] = S-geranylgeranyl-L-cysteinyl-[protein] + diphosphate. Its activity is regulated as follows. The enzymatic reaction requires the aid of the Rab escort protein REP. In terms of biological role, catalyzes the transfer of a geranylgeranyl moiety from geranylgeranyl diphosphate to both cysteines of Rab proteins with the C-terminal sequence -CCXX, CXXX, -XCCX and -XCXC, such as RABA1A, RABA2A, RABF2A and RABG2. Involved in the geranylgeranylation of RABA2A. In vitro, can prenylate PGGTI targets with the C-terminal sequence Cys-aliphatic-aliphatic-X (CaaX) with leucine in the terminal position. Substrates with the C-terminal sequence -CSIL such as ARAC11/ROP1 or GG2/AGG2 are prenylated independently of REP and when the beta subunit is associated with the alpha subunit RGTA1. Functionally, required for male fertility and root tip growth. The protein is Geranylgeranyl transferase type-2 subunit beta 1 of Arabidopsis thaliana (Mouse-ear cress).